A 134-amino-acid chain; its full sequence is 6,7-dimethyl-8-ribityllumazine synthase (134 aa).

Residues F12, 44-46 (VFD), and 68-70 (SVI) contribute to the 5-amino-6-(D-ribitylamino)uracil site. 73–74 (ET) contacts (2S)-2-hydroxy-3-oxobutyl phosphate. H76 functions as the Proton donor in the catalytic mechanism. L101 is a 5-amino-6-(D-ribitylamino)uracil binding site. R116 contacts (2S)-2-hydroxy-3-oxobutyl phosphate.

This sequence belongs to the DMRL synthase family.

The enzyme catalyses (2S)-2-hydroxy-3-oxobutyl phosphate + 5-amino-6-(D-ribitylamino)uracil = 6,7-dimethyl-8-(1-D-ribityl)lumazine + phosphate + 2 H2O + H(+). It functions in the pathway cofactor biosynthesis; riboflavin biosynthesis; riboflavin from 2-hydroxy-3-oxobutyl phosphate and 5-amino-6-(D-ribitylamino)uracil: step 1/2. Functionally, catalyzes the formation of 6,7-dimethyl-8-ribityllumazine by condensation of 5-amino-6-(D-ribitylamino)uracil with 3,4-dihydroxy-2-butanone 4-phosphate. This is the penultimate step in the biosynthesis of riboflavin. This chain is 6,7-dimethyl-8-ribityllumazine synthase, found in Methanosarcina acetivorans (strain ATCC 35395 / DSM 2834 / JCM 12185 / C2A).